The sequence spans 164 residues: Thioredoxin domain-containing protein R443 (164 aa).

The chain crosses the membrane as a helical span at residues 8 to 28 (HIVLIVLAIILILWIISLLLC). The region spanning 36-163 (YQVPIIQPMQ…LTQFIRSNMN (128 aa)) is the Thioredoxin domain. The cysteines at positions 84 and 87 are disulfide-linked.

It belongs to the thioredoxin family.

It is found in the host membrane. The protein localises to the virion. This is Thioredoxin domain-containing protein R443 from Acanthamoeba polyphaga mimivirus (APMV).